The sequence spans 382 residues: Draxin-A (382 aa).

An N-terminal signal peptide occupies residues 1–22; sequence MMSSSWCLPLALLFSTLAVSHS. 3 disordered regions span residues 28 to 213, 233 to 252, and 275 to 297; these read THAK…PPSP, LPTL…GKMQ, and VDAW…SGNV. Over residues 73–82 the composition is skewed to low complexity; that stretch reads RGAKASSGAG. Residues 139 to 149 show a composition bias toward basic residues; that stretch reads GPRKGRGQGHG. Low complexity predominate over residues 190–201; it reads SVSSAAAATSPS. Over residues 281 to 290 the composition is skewed to basic residues; that stretch reads SRKKDKRRSK. N291 and N296 each carry an N-linked (GlcNAc...) asparagine glycan.

This sequence belongs to the draxin family.

It localises to the secreted. In terms of biological role, chemorepulsive axon guidance protein required for the development of spinal cord and forebrain commissures. Acts as a chemorepulsive guidance protein for commissural axons during development. Able to inhibit or repel neurite outgrowth from dorsal spinal cord. The chain is Draxin-A (draxin-A) from Salmo salar (Atlantic salmon).